Here is a 503-residue protein sequence, read N- to C-terminus: Guanosine-5'-triphosphate,3'-diphosphate pyrophosphatase (503 aa).

The protein belongs to the GppA/Ppx family. GppA subfamily.

The catalysed reaction is guanosine 3'-diphosphate 5'-triphosphate + H2O = guanosine 3',5'-bis(diphosphate) + phosphate + H(+). It functions in the pathway purine metabolism; ppGpp biosynthesis; ppGpp from GTP: step 2/2. Catalyzes the conversion of pppGpp to ppGpp. Guanosine pentaphosphate (pppGpp) is a cytoplasmic signaling molecule which together with ppGpp controls the 'stringent response', an adaptive process that allows bacteria to respond to amino acid starvation, resulting in the coordinated regulation of numerous cellular activities. This is Guanosine-5'-triphosphate,3'-diphosphate pyrophosphatase from Pseudoalteromonas atlantica (strain T6c / ATCC BAA-1087).